Reading from the N-terminus, the 129-residue chain is uncharacterized protein (129 aa).

The first 20 residues, 1–20 (MIYPLFRICILGAFLLGSYA), serve as a signal peptide directing secretion.

This is an uncharacterized protein from Saccharomyces cerevisiae (strain ATCC 204508 / S288c) (Baker's yeast).